A 352-amino-acid polypeptide reads, in one-letter code: Ion-translocating oxidoreductase complex subunit D (352 aa).

Transmembrane regions (helical) follow at residues 20–40 (IMLL…WFFG), 42–62 (GTLV…ALVL), 78–109 (ALLT…VIIA), 123–143 (PAMI…TSWL), and 148–168 (IAVN…GHTA). FMN phosphoryl threonine is present on threonine 187. 5 consecutive transmembrane segments (helical) span residues 214-234 (ILAG…GVWL), 242-262 (WHIP…GWLF), 267-287 (LAAP…FFIL), 301-321 (LIFG…GGYP), and 322-342 (DGVA…DYYT).

The protein belongs to the NqrB/RnfD family. As to quaternary structure, the complex is composed of six subunits: RsxA, RsxB, RsxC, RsxD, RsxE and RsxG. It depends on FMN as a cofactor.

The protein localises to the cell inner membrane. Its function is as follows. Part of a membrane-bound complex that couples electron transfer with translocation of ions across the membrane. Required to maintain the reduced state of SoxR. The polypeptide is Ion-translocating oxidoreductase complex subunit D (Escherichia coli O157:H7).